The chain runs to 273 residues: Bis(5'-nucleosyl)-tetraphosphatase, symmetrical (273 aa).

It belongs to the Ap4A hydrolase family.

It carries out the reaction P(1),P(4)-bis(5'-adenosyl) tetraphosphate + H2O = 2 ADP + 2 H(+). In terms of biological role, hydrolyzes diadenosine 5',5'''-P1,P4-tetraphosphate to yield ADP. The sequence is that of Bis(5'-nucleosyl)-tetraphosphatase, symmetrical from Aeromonas hydrophila subsp. hydrophila (strain ATCC 7966 / DSM 30187 / BCRC 13018 / CCUG 14551 / JCM 1027 / KCTC 2358 / NCIMB 9240 / NCTC 8049).